Consider the following 277-residue polypeptide: Orotidine 5'-phosphate decarboxylase (277 aa).

Substrate is bound by residues D40, 62–64, 93–102, Y229, and R247; these read KTH and DRKFIDIGNT. K95 (proton donor) is an active-site residue.

The protein belongs to the OMP decarboxylase family.

The catalysed reaction is orotidine 5'-phosphate + H(+) = UMP + CO2. It participates in pyrimidine metabolism; UMP biosynthesis via de novo pathway; UMP from orotate: step 2/2. The polypeptide is Orotidine 5'-phosphate decarboxylase (pyrG) (Aspergillus kawachii (White koji mold)).